The sequence spans 194 residues: Small ribosomal subunit protein uS4c (194 aa).

Residues 82–143 (MRLDNILFRL…KQRSKALIQD (62 aa)) form the S4 RNA-binding domain.

The protein belongs to the universal ribosomal protein uS4 family. Part of the 30S ribosomal subunit. Contacts protein S5. The interaction surface between S4 and S5 is involved in control of translational fidelity.

Its subcellular location is the plastid. The protein resides in the chloroplast. Its function is as follows. One of the primary rRNA binding proteins, it binds directly to 16S rRNA where it nucleates assembly of the body of the 30S subunit. In terms of biological role, with S5 and S12 plays an important role in translational accuracy. This Bobartia gladiata (Sword rush-lily) protein is Small ribosomal subunit protein uS4c (rps4).